We begin with the raw amino-acid sequence, 1056 residues long: E3 SUMO-protein ligase ZNF451 (1056 aa).

Positions 1–39 (MGDPGPEIIESVPPAGPEASESTTDENEDDIQFVSEGPL) are disordered. The segment at 1–246 (MGDPGPEIIE…AADGHSNSLL (246 aa)) is sufficient for E3 SUMO-protein ligase activity. Residues 1–344 (MGDPGPEIIE…RVRCQNAGPV (344 aa)) form an important for interaction with SUMO1 and SUMO2 region. Residues 30-37 (DIQFVSEG) are interaction with SUMO2 1. The PLRP motif lies at 38–41 (PLRP). Residues 42–50 (VLEYIDLVS) form an interaction with SUMO2 2 region. Residues Lys75, Lys77, Lys106, Lys139, and Lys153 each participate in a glycyl lysine isopeptide (Lys-Gly) (interchain with G-Cter in SUMO2) cross-link. Position 155 is a phosphoserine (Ser155). The residue at position 158 (Arg158) is an Omega-N-methylarginine. A Glycyl lysine isopeptide (Lys-Gly) (interchain with G-Cter in SUMO2) cross-link involves residue Lys167. The important for interaction with SMAD4 stretch occupies residues 168–521 (PILCPIMHCN…HMSRFHGGAH (354 aa)). A C2H2-type 1 zinc finger spans residues 169 to 195 (ILCPIMHCNKEFDNGHLLLGHLKRFDH). The C2H2-type 2; degenerate zinc finger occupies 212–234 (FACAVCYEHFVTQQQYKDHLLSR). A C2H2-type 3 zinc finger spans residues 253–277 (YACPQCFLLFSTKDECLKHMSTKNH). Glycyl lysine isopeptide (Lys-Gly) (interchain with G-Cter in SUMO2) cross-links involve residues Lys270, Lys275, Lys283, Lys288, Lys301, and Lys309. The C2H2-type 4; atypical zinc-finger motif lies at 315 to 338 (VKCVACHQTLRSHMELTAHFRVRC). A C2H2-type 5 zinc finger spans residues 362–385 (GYCSDCNQVFMDVASTQSHKNSGH). Lys420 is covalently cross-linked (Glycyl lysine isopeptide (Lys-Gly) (interchain with G-Cter in SUMO2)). Residue Ser429 is modified to Phosphoserine. Lys431 participates in a covalent cross-link: Glycyl lysine isopeptide (Lys-Gly) (interchain with G-Cter in SUMO2). C2H2-type zinc fingers lie at residues 494–517 (YKCV…SRFH) and 527–550 (FWCR…TEFH). Residues Lys539 and Lys583 each participate in a glycyl lysine isopeptide (Lys-Gly) (interchain with G-Cter in SUMO2) cross-link. The segment at 604–629 (WQCRICEDMFESQECVKQHCMSLTSH) adopts a C2H2-type 8; atypical zinc-finger fold. 2 C2H2-type zinc fingers span residues 634 to 657 (YSCA…QDEH) and 665 to 688 (YFCG…KEHH). Lys645 participates in a covalent cross-link: Glycyl lysine isopeptide (Lys-Gly) (interchain with G-Cter in SUMO2). A Glycyl lysine isopeptide (Lys-Gly) (interchain with G-Cter in SUMO1); alternate cross-link involves residue Lys704. Lys704 is covalently cross-linked (Glycyl lysine isopeptide (Lys-Gly) (interchain with G-Cter in SUMO2); alternate). Glycyl lysine isopeptide (Lys-Gly) (interchain with G-Cter in SUMO2) cross-links involve residues Lys729 and Lys746. 2 C2H2-type zinc fingers span residues 751-774 (FRCS…CQVH) and 787-810 (IKCG…HRKH). Residues Lys788, Lys815, Lys843, Lys849, Lys947, Lys988, and Lys989 each participate in a glycyl lysine isopeptide (Lys-Gly) (interchain with G-Cter in SUMO2) cross-link. Disordered regions lie at residues 806 to 830 (FHRK…STCQ) and 839 to 858 (EKNL…KGAE). Over residues 849–858 (KHSDVEKGAE) the composition is skewed to basic and acidic residues. The interval 1019–1045 (KECDSDDSSGMKGSPAEELRATEDVEL) is disordered. Residues 1033–1045 (PAEELRATEDVEL) show a composition bias toward basic and acidic residues. The segment at 1045 to 1056 (LEEAIRRSLEEM) is important for ubiquitin binding.

Belongs to the krueppel C2H2-type zinc-finger protein family. In terms of assembly, homooligomer. Interacts (via N-terminal region) with SUMO1. Interacts (via N-terminal region) with SUMO2. Interacts simultaneously with two SUMO2 chains. Identified in a complex with SUMO2 and UBE2I/UBC9, where one ZNF451 interacts with one UBE2I/UBC9 and two SUMO2 chains, one bound to the UBE2I/UBC9 active site and the other to another region of the same UBE2I/UBC9 molecule. Interacts (via C-terminus) with ubiquitin. Interacts (via N-terminal zinc-finger domains) with SMAD4 (via MH2 domain). Interacts with SMAD2 and SMAD3. Identified in a complex that contains at least ZNF451, SMAD2, SMAD3 and SMAD4. Interacts with EP300. Inhibits interaction between EP300 and the SMAD4 complex. Interacts with SIMC1. In terms of processing, sumoylated. Predominantly sumoylated on the N-terminal region that is important for interaction with SUMO1 and SUMO2. Sumoylation is important for localization in nuclear granules; desumoylation leads to diffuse nucleoplasmic location. Autosumoylated (in vitro). Sumoylation enhances E3 SUMO-protein ligase activity.

It is found in the nucleus. Its subcellular location is the PML body. It localises to the nucleoplasm. It functions in the pathway protein modification; protein sumoylation. In terms of biological role, E3 SUMO-protein ligase; has a preference for SUMO2 and SUMO3 and facilitates UBE2I/UBC9-mediated sumoylation of target proteins. Plays a role in protein SUMO2 modification in response to stress caused by DNA damage and by proteasome inhibitors (in vitro). Required for MCM4 sumoylation. Has no activity with SUMO1. Preferentially transfers an additional SUMO2 chain onto the SUMO2 consensus site 'Lys-11'. Negatively regulates transcriptional activation mediated by the SMAD4 complex in response to TGF-beta signaling. Inhibits EP300-mediated acetylation of histone H3 at 'Lys-9'. Plays a role in regulating the transcription of AR targets. This chain is E3 SUMO-protein ligase ZNF451 (Znf451), found in Mus musculus (Mouse).